The sequence spans 476 residues: Probable isoprenylcysteine alpha-carbonyl methylesterase ICMEL1 (476 aa).

A compositionally biased stretch (polar residues) spans 92 to 104 (NCLSAFSDDTNGT). A disordered region spans residues 92 to 116 (NCLSAFSDDTNGTADGGNNSGDRQT). 2 consecutive transmembrane segments (helical) span residues 153 to 173 (FMALGCYAFLLMPGFIQVGYY) and 208 to 228 (VVAFVTGGAWIIGYKAWGSLL). Substrate is bound by residues 214-216 (GGA) and 285-287 (QSA). Active-site residues include serine 286, aspartate 388, and histidine 420.

Belongs to the AB hydrolase superfamily. Isoprenylcysteine methylesterase family. Expressed in roots, rosette and cauline leaves, stems, flowers and siliques.

Its subcellular location is the endoplasmic reticulum membrane. It is found in the golgi apparatus membrane. It catalyses the reaction [protein]-C-terminal S-[(2E,6E)-farnesyl]-L-cysteine methyl ester + H2O = [protein]-C-terminal S-[(2E,6E)-farnesyl]-L-cysteine + methanol + H(+). Functionally, catalyzes the demethylation of isoprenylcysteine methylesters. May be involved in the regulation of ABA signaling. This chain is Probable isoprenylcysteine alpha-carbonyl methylesterase ICMEL1, found in Arabidopsis thaliana (Mouse-ear cress).